The sequence spans 2748 residues: Chalcone synthase cfoA (2748 aa).

The segment at 13-511 is adenylation (A) domain; that stretch reads RHAGESCEKV…DTVPRTVIGK (499 aa). In terms of domain architecture, Carrier 1 spans 535 to 620; the sequence is DLIEALVMAE…AVSTYLHGRL (86 aa). An O-(pantetheine 4'-phosphoryl)serine modification is found at S579. Residues 641-1073 form the Ketosynthase family 3 (KS3) domain; that stretch reads VEPIAIVSMA…GTNSHIILEQ (433 aa). Active-site for beta-ketoacyl synthase activity residues include C813, H948, and H995. The Malonyl-CoA:ACP transacylase (MAT) domain occupies 1196–1489; the sequence is FSGQGSWMPT…ATHGTVDKLL (294 aa). The tract at residues 1561–1842 is dehydratase (DH) domain; that stretch reads LGHEMIFNAT…ENSFSMTMTD (282 aa). Residues 1563–1707 form an N-terminal hotdog fold region; sequence HEMIFNATSI…GTFQLISQPN (145 aa). One can recognise a PKS/mFAS DH domain in the interval 1563-1866; that stretch reads HEMIFNATSI…LRTWQPTVAG (304 aa). H1595 (proton acceptor; for dehydratase activity) is an active-site residue. A C-terminal hotdog fold region spans residues 1722–1866; the sequence is AESDVNISEA…LRTWQPTVAG (145 aa). Residue D1784 is the Proton donor; for dehydratase activity of the active site. The 180-residue stretch at 2031-2210 folds into the Ketoreductase (KR) domain; it reads GTVLITGGTG…ALSLAWGPWA (180 aa). A Carrier 2 domain is found at 2305–2383; it reads NRHDTLLGLV…ALVEYLLPRI (79 aa). S2342 bears the O-(pantetheine 4'-phosphoryl)serine mark. Positions 2386-2426 are disordered; that stretch reads EPQPEVDTDSDASTTAGDTSVSRDSGKEDELSPSSSVTTLA. Low complexity predominate over residues 2396-2407; sequence DASTTAGDTSVS. Residues 2519-2742 are thioester reductase (TE) domain; sequence VGLSVYSNLA…GAAGEIERWA (224 aa).

It in the N-terminal section; belongs to the NRP synthetase family. Pantetheine 4'-phosphate serves as cofactor.

Its pathway is secondary metabolite biosynthesis; flavonoid biosynthesis. Functionally, hybrid PKS-NRPS synthetase; part of the gene cluster that mediates the biosynthesis of chlorflavonin, a fungal flavonoid with acetolactate synthase inhibitory activity. Within the pathway, the PKS-NRPS cfoA, is responsible for the generation of the key precursor chalcone. The adenylation (A) domain activates benzoic acid or p-hydroxybenzoic acid which are transferred to the thiol group of the pantetheinyl residue of the T domain, and further transferred to the adjacent PKS portion of cfoA. Within the PKS portion of cfoA, benzoic acid or p-hydroxybenzoic acid act as starter units for respectively four malonyl-CoA molecules for elongation by the AT and KS domains. Afterwards, chalcone is cyclized through Claisen condensation and thereby released either spontaneously or catalyzed by the TE domain. Then, a new type of chalcone isomerase, cfoK, catalyzes the conversion of the chalcone into a flavanone by a histidine-mediated oxa-Michael addition mechanism. The desaturation of flavanone to flavone is catalyzed by a new type of flavone synthase, the flavin mononucleotide (FMN)-dependent oxidoreductase cfoJ. Monooxygenases cfoF, cfoG, and P450 cfoH are responsible for the hydroxylation of the flavonoid skeleton at sites C3, C8, and C2', respectively. Like cfoF, the dehydratase cfoI plays also a role in the hydroxylation of position C3. Methyltransferases cfoB, cfoC, and cfoD then catalyze the methylation of C7-OH, C8-OH, and C3-OH, respectively. Finally, the monooxygenase cfoE is responsible for the chlorination of flavonoid at position C3'. The protein is Chalcone synthase cfoA of Aspergillus candidus.